The sequence spans 454 residues: Bifunctional protein GlmU (454 aa).

Residues M1 to R226 form a pyrophosphorylase region. Residues L8–G11, K22, Q73, G78–T79, Y100–D102, G137, E151, N166, and N224 each bind UDP-N-acetyl-alpha-D-glucosamine. D102 contributes to the Mg(2+) binding site. N224 contacts Mg(2+). Residues V227–A247 are linker. The segment at G248–K454 is N-acetyltransferase. 2 residues coordinate UDP-N-acetyl-alpha-D-glucosamine: R330 and K348. Catalysis depends on H360, which acts as the Proton acceptor. Residues Y363 and N374 each coordinate UDP-N-acetyl-alpha-D-glucosamine. Acetyl-CoA contacts are provided by residues A377, N383–Y384, S402, A420, and R437.

In the N-terminal section; belongs to the N-acetylglucosamine-1-phosphate uridyltransferase family. It in the C-terminal section; belongs to the transferase hexapeptide repeat family. Homotrimer. It depends on Mg(2+) as a cofactor.

The protein localises to the cytoplasm. The enzyme catalyses alpha-D-glucosamine 1-phosphate + acetyl-CoA = N-acetyl-alpha-D-glucosamine 1-phosphate + CoA + H(+). The catalysed reaction is N-acetyl-alpha-D-glucosamine 1-phosphate + UTP + H(+) = UDP-N-acetyl-alpha-D-glucosamine + diphosphate. It functions in the pathway nucleotide-sugar biosynthesis; UDP-N-acetyl-alpha-D-glucosamine biosynthesis; N-acetyl-alpha-D-glucosamine 1-phosphate from alpha-D-glucosamine 6-phosphate (route II): step 2/2. The protein operates within nucleotide-sugar biosynthesis; UDP-N-acetyl-alpha-D-glucosamine biosynthesis; UDP-N-acetyl-alpha-D-glucosamine from N-acetyl-alpha-D-glucosamine 1-phosphate: step 1/1. Its pathway is bacterial outer membrane biogenesis; LPS lipid A biosynthesis. Its function is as follows. Catalyzes the last two sequential reactions in the de novo biosynthetic pathway for UDP-N-acetylglucosamine (UDP-GlcNAc). The C-terminal domain catalyzes the transfer of acetyl group from acetyl coenzyme A to glucosamine-1-phosphate (GlcN-1-P) to produce N-acetylglucosamine-1-phosphate (GlcNAc-1-P), which is converted into UDP-GlcNAc by the transfer of uridine 5-monophosphate (from uridine 5-triphosphate), a reaction catalyzed by the N-terminal domain. The chain is Bifunctional protein GlmU from Shewanella sp. (strain MR-4).